Reading from the N-terminus, the 291-residue chain is Phosphate import ATP-binding protein PstB (291 aa).

The ABC transporter domain occupies 45–286 (YSTQNLDLWY…PADKQTEDYI (242 aa)). Residue 77–84 (GPSGCGKS) participates in ATP binding.

It belongs to the ABC transporter superfamily. Phosphate importer (TC 3.A.1.7) family. In terms of assembly, the complex is composed of two ATP-binding proteins (PstB), two transmembrane proteins (PstC and PstA) and a solute-binding protein (PstS).

The protein resides in the cell membrane. It carries out the reaction phosphate(out) + ATP + H2O = ADP + 2 phosphate(in) + H(+). Functionally, part of the ABC transporter complex PstSACB involved in phosphate import. Responsible for energy coupling to the transport system. The chain is Phosphate import ATP-binding protein PstB from Staphylococcus epidermidis (strain ATCC 12228 / FDA PCI 1200).